Reading from the N-terminus, the 258-residue chain is Archaerhodopsin-3 (258 aa).

Residues 1-6 (MDPIAL) constitute a propeptide that is removed on maturation. Q7 is subject to Pyrrolidone carboxylic acid. Residues 7-18 (QAGYDLLGDGRP) are Extracellular-facing. The chain crosses the membrane as a helical span at residues 19–40 (ETLWLGIGTLLMLIGTFYFLVR). The Cytoplasmic segment spans residues 41-49 (GWGVTDKDA). The helical transmembrane segment at 50 to 71 (REYYAVTILVPGIASAAYLSMF) threads the bilayer. At 72–89 (FGIGLTEVTVGGEMLDIY) the chain is on the extracellular side. Residues 90–111 (YARYADWLFTTPLLLLDLALLA) form a helical membrane-spanning segment. At 112 to 114 (KVD) the chain is on the cytoplasmic side. A helical membrane pass occupies residues 115–137 (RVTIGTLVGVDALMIVTGLIGAL). At 138 to 141 (SHTA) the chain is on the extracellular side. A helical membrane pass occupies residues 142–170 (IARYSWWLFSTICMIVVLYFLATSLRSAA). Residues 171–173 (KER) are Cytoplasmic-facing. The helical transmembrane segment at 174 to 202 (GPEVASTFNTLTALVLVLWTAYPILWIIG) threads the bilayer. Residues 203–210 (TEGAGVVG) lie on the Extracellular side of the membrane. The chain crosses the membrane as a helical span at residues 211–243 (LGIETLLFMVLDVTAKVGFGFILLRSRAILGDT). K226 is modified (N6-(retinylidene)lysine). The Cytoplasmic segment spans residues 244–258 (EAPEPSAGADVSAAD).

It belongs to the archaeal/bacterial/fungal opsin family.

The protein resides in the cell membrane. Light-driven proton pump. The chain is Archaerhodopsin-3 (aop3) from Halorubrum sodomense.